A 297-amino-acid polypeptide reads, in one-letter code: Tyrosine recombinase XerD (297 aa).

The Core-binding (CB) domain occupies 1-86 (MNDLIEDFLH…SLRSFFHYLM (86 aa)). The Tyr recombinase domain occupies 107–291 (GLPKVLNLDD…TKLRLKDVYK (185 aa)). Residues arginine 147, lysine 171, histidine 243, arginine 246, and histidine 269 contribute to the active site. The active-site O-(3'-phospho-DNA)-tyrosine intermediate is tyrosine 278.

Belongs to the 'phage' integrase family. XerD subfamily. In terms of assembly, forms a cyclic heterotetrameric complex composed of two molecules of XerC and two molecules of XerD.

The protein localises to the cytoplasm. Functionally, site-specific tyrosine recombinase, which acts by catalyzing the cutting and rejoining of the recombining DNA molecules. The XerC-XerD complex is essential to convert dimers of the bacterial chromosome into monomers to permit their segregation at cell division. It also contributes to the segregational stability of plasmids. This is Tyrosine recombinase XerD from Listeria monocytogenes serotype 4b (strain F2365).